A 575-amino-acid polypeptide reads, in one-letter code: Acyloxyacyl hydrolase (575 aa).

Positions 1-25 (MKSPWRILVVSPLLLLPLHSSTSRA) are cleaved as a signal peptide. Residues 26 to 34 (HDNQPGTIR) constitute a propeptide that is removed on maturation. One can recognise a Saposin B-type domain in the interval 36 to 117 (DHYTCVGCVL…HTLEFCKQEP (82 aa)). An important for enzyme activity, localization to cytoplasmic vesicles, and protein stability region spans residues 37 to 69 (HYTCVGCVLVVSVIEQLAQVHNSTVQASMERLC). Disulfide bonds link Cys40–Cys113, Cys43–Cys107, Cys69–Cys82, Cys122–Cys453, Cys159–Cys168, Cys205–Cys229, Cys248–Cys328, and Cys375–Cys459. An N-linked (GlcNAc...) asparagine glycan is attached at Asn58. The lipopolysaccharide binding stretch occupies residues 172–176 (KLAIK). Ca(2+) is bound by residues Asp183, Asp185, Asp187, Tyr189, Asp204, Asn206, Asp207, Asp209, Val212, Asp222, Asp226, Asn228, Asn230, Ile232, and Glu244. Residue Asn206 is glycosylated (N-linked (GlcNAc...) asparagine). The active site involves Ser262. N-linked (GlcNAc...) asparagine glycosylation occurs at Asn466.

In terms of assembly, heterodimer of the large and small subunits; disulfide-linked. It depends on Ca(2+) as a cofactor. In terms of processing, cleaved into a large and a small subunit. The small subunit is N-glycosylated.

The protein localises to the secreted. It is found in the cytoplasmic vesicle. The catalysed reaction is a 3-(acyloxy)acyl derivative of bacterial toxin + H2O = a 3-hydroxyacyl derivative of bacterial toxin + a fatty acid + H(+). Functionally, removes the secondary (acyloxyacyl-linked) fatty acyl chains from the lipid A region of bacterial lipopolysaccharides (LPS). By breaking down LPS, terminates the host response to bacterial infection and prevents prolonged and damaging inflammatory responses. In peritoneal macrophages, seems to be important for recovery from a state of immune tolerance following infection by Gram-negative bacteria. The chain is Acyloxyacyl hydrolase from Oryctolagus cuniculus (Rabbit).